A 440-amino-acid chain; its full sequence is UDP-N-acetylglucosamine 1-carboxyvinyltransferase 1 (440 aa).

22–23 lines the phosphoenolpyruvate pocket; sequence KN. R93 lines the UDP-N-acetyl-alpha-D-glucosamine pocket. The active-site Proton donor is the C117. Residue C117 is modified to 2-(S-cysteinyl)pyruvic acid O-phosphothioketal. Residues 122-126, D306, and V328 each bind UDP-N-acetyl-alpha-D-glucosamine; that span reads RPIDQ.

It belongs to the EPSP synthase family. MurA subfamily.

It is found in the cytoplasm. It carries out the reaction phosphoenolpyruvate + UDP-N-acetyl-alpha-D-glucosamine = UDP-N-acetyl-3-O-(1-carboxyvinyl)-alpha-D-glucosamine + phosphate. The protein operates within cell wall biogenesis; peptidoglycan biosynthesis. Its function is as follows. Cell wall formation. Adds enolpyruvyl to UDP-N-acetylglucosamine. In Halalkalibacterium halodurans (strain ATCC BAA-125 / DSM 18197 / FERM 7344 / JCM 9153 / C-125) (Bacillus halodurans), this protein is UDP-N-acetylglucosamine 1-carboxyvinyltransferase 1.